The sequence spans 251 residues: WUSCHEL-related homeobox 4 (251 aa).

2 disordered regions span residues 1–21 and 33–93; these read MKVHEFSNGFSSSWDQHDSTS and LAPK…RWNP. Low complexity predominate over residues 11 to 21; the sequence is SSSWDQHDSTS. The segment covering 71–83 has biased composition (basic and acidic residues); that stretch reads KFEHKRDPPHQLE. The segment at residues 86–150 is a DNA-binding region (homeobox; WUS-type); that stretch reads PGGTRWNPTQ…NHKARERQKQ (65 aa).

Belongs to the WUS homeobox family. As to expression, expressed in the vasculature of the whole plant (roots, hypocotyls, cotyledons and leaves), trichomes and stomata. Expresse in the developing vascular bundles of root and shoot lateral organs.

Its subcellular location is the nucleus. Functionally, promotes differentiation and/or maintenance of the vascular procambium, the initial cells of the developing vasculature. Part of the TDIF-TDR-WOX4 signaling pathway that plays a crucial role in the maintenance of the vascular meristem organization during secondary growth. Is required for promoting the proliferation of procambial/cambial stem cells but not for repressing their commitment to xylem differentiation in response to the TDIF signal. Acts redundantly with WOX14 downstream of the TDR/PXY receptor kinase to regulate procambial cell proliferation and differentiation in vascular tissue, independently of any role in vascular. Acts as a cambium regulator in the inflorescence stem. Is required for auxin-dependent cambium stimulation in the inflorescence stem. This is WUSCHEL-related homeobox 4 (WOX4) from Arabidopsis thaliana (Mouse-ear cress).